Consider the following 58-residue polypeptide: uncharacterized protein (58 aa).

The protein resides in the plastid. It localises to the chloroplast. This is an uncharacterized protein from Chlamydomonas reinhardtii (Chlamydomonas smithii).